A 111-amino-acid chain; its full sequence is uncharacterized protein (111 aa).

Helical transmembrane passes span 4–21 (FITA…FVSF), 28–47 (LVYF…YMIY), 51–73 (TGIR…VTAF), and 80–102 (SFFF…YLGM).

The protein localises to the cell membrane. This is an uncharacterized protein from Bacillus subtilis (strain 168).